The chain runs to 213 residues: Ras-related protein Rab-25 (213 aa).

GTP contacts are provided by Ser-21, Gly-24, Lys-25, Thr-26, Asn-27, Ser-38, His-39, Thr-43, and Thr-44. Position 26 (Thr-26) interacts with Mg(2+). Short sequence motifs (switch) lie at residues Asn-35–Phe-49 and Asp-67–Gly-84. Thr-44 and Asp-67 together coordinate Mg(2+). The GTP site is built by Gly-70, Asn-125, Lys-126, Asp-128, Ala-156, and Leu-157. Residues Cys-209 and Cys-210 are each lipidated (S-geranylgeranyl cysteine). A Cysteine methyl ester modification is found at Cys-210. Residues Ile-211–Leu-213 constitute a propeptide, removed in mature form.

Belongs to the small GTPase superfamily. Rab family. As to quaternary structure, interacts (GTP-bound form) with RAB11FIP1, RAB11FIP2, RAB11FIP3 and RAB11FIP4. Interacts (via the hypervariable C-terminal region) with ITGB1 (via the cytoplasmic region); the interaction is GTP-dependent. Interacts with ITGAV. Associates with the integrin alpha-V/beta-1 heterodimer. Interacts with VPS33B. The cofactor is Mg(2+). In terms of tissue distribution, expression is restricted to epithelial cells. Expressed in ovarian epithelium (NOE) and breast tissue. Expressed in ovarian cancer; expression is increased relative to NOE cells. Expression in ovarian cancer is stage dependent, with stage III and stage IV showing higher levels than early stage cancers. Expressed in breast cancer; expression is increased relative to normal breast tissue.

It is found in the cell membrane. Its subcellular location is the cytoplasmic vesicle. The protein resides in the cell projection. It localises to the pseudopodium membrane. It catalyses the reaction GTP + H2O = GDP + phosphate + H(+). With respect to regulation, regulated by guanine nucleotide exchange factors (GEFs) which promote the exchange of bound GDP for free GTP. Regulated by GTPase activating proteins (GAPs) which increase the GTP hydrolysis activity. Inhibited by GDP dissociation inhibitors (GDIs) which prevent Rab-GDP dissociation. The small GTPases Rab are key regulators of intracellular membrane trafficking, from the formation of transport vesicles to their fusion with membranes. Rabs cycle between an inactive GDP-bound form and an active GTP-bound form that is able to recruit to membranes different set of downstream effectors directly responsible for vesicle formation, movement, tethering and fusion. RAB25 regulates epithelial cell differentiation, proliferation and survival, thereby playing key roles in tumorigenesis. Promotes invasive migration of cells in which it functions to localize and maintain integrin alpha-V/beta-1 at the tips of extending pseudopodia. Involved in the regulation of epithelial morphogenesis through the control of CLDN4 expression and localization at tight junctions. May selectively regulate the apical recycling pathway. Together with MYO5B regulates transcytosis. The polypeptide is Ras-related protein Rab-25 (Homo sapiens (Human)).